Consider the following 294-residue polypeptide: Bifunctional protein FolD (294 aa).

Residues 166-168 (GRS), Ser191, and Ile232 each bind NADP(+).

This sequence belongs to the tetrahydrofolate dehydrogenase/cyclohydrolase family. As to quaternary structure, homodimer.

It catalyses the reaction (6R)-5,10-methylene-5,6,7,8-tetrahydrofolate + NADP(+) = (6R)-5,10-methenyltetrahydrofolate + NADPH. It carries out the reaction (6R)-5,10-methenyltetrahydrofolate + H2O = (6R)-10-formyltetrahydrofolate + H(+). Its pathway is one-carbon metabolism; tetrahydrofolate interconversion. Its function is as follows. Catalyzes the oxidation of 5,10-methylenetetrahydrofolate to 5,10-methenyltetrahydrofolate and then the hydrolysis of 5,10-methenyltetrahydrofolate to 10-formyltetrahydrofolate. This Nitrobacter hamburgensis (strain DSM 10229 / NCIMB 13809 / X14) protein is Bifunctional protein FolD.